A 379-amino-acid polypeptide reads, in one-letter code: MHYKLLFAAAAASLASAVSAAGVVGAAEGFAHGVTGGGSASPVYPTTTDELVSYLGDNEPRVIILDRTFDFTGTEGTETTTGCAPWGTASQCQVAINLHSWCDNYQASAPKVSVTYDKAGILPITVNSNKSIVGQGTKGVIKGKGLRVVSGAKNVIIQNIAVTDINPKYVWGGDAITVDDSDLVWIDHVTTARIGRQHIVLGTSADNRVTISYSLIDGRSDYSATCNGHHYWGVYLDGSNDMVTLKGNYFYNLSGRMPKVQGNTLLHAVNNLFHNFDGHAFEIGTGGYVLAEGNVFQDVNTVVETPISGQLFSSPDANTNQQCASVFGRSCQLNAFGNSGSMSGSDTSIISKFAGKTIAAAHPPGNIAQWTMKNAGQGK.

Residues 1 to 20 form the signal peptide; the sequence is MHYKLLFAAAAASLASAVSA. Cystine bridges form between cysteine 83–cysteine 102 and cysteine 92–cysteine 226. N-linked (GlcNAc...) asparagine glycans are attached at residues asparagine 129 and asparagine 252. Arginine 256 is a catalytic residue. The cysteines at positions 323 and 331 are disulfide-linked.

It belongs to the polysaccharide lyase 1 family.

The protein localises to the secreted. The enzyme catalyses Eliminative cleavage of (1-&gt;4)-alpha-D-galacturonan methyl ester to give oligosaccharides with 4-deoxy-6-O-methyl-alpha-D-galact-4-enuronosyl groups at their non-reducing ends.. Its function is as follows. Pectinolytic enzymes consist of four classes of enzymes: pectin lyase, polygalacturonase, pectin methylesterase and rhamnogalacturonase. Among pectinolytic enzymes, pectin lyase is the most important in depolymerization of pectin, since it cleaves internal glycosidic bonds of highly methylated pectins. This Aspergillus niger (strain ATCC MYA-4892 / CBS 513.88 / FGSC A1513) protein is Probable pectin lyase B (pelB).